Reading from the N-terminus, the 364-residue chain is 3-isopropylmalate dehydrogenase (364 aa).

79–92 serves as a coordination point for NAD(+); that stretch reads GSKWDHLPEIEKPE. Residues Arg-100, Arg-110, Arg-139, and Asp-227 each contribute to the substrate site. Mg(2+) contacts are provided by Asp-227, Asp-251, and Asp-255. 285–297 is an NAD(+) binding site; that stretch reads GSAPNIAGKTIAN.

It belongs to the isocitrate and isopropylmalate dehydrogenases family. LeuB type 1 subfamily. Homodimer. The cofactor is Mg(2+). Mn(2+) serves as cofactor.

Its subcellular location is the cytoplasm. The enzyme catalyses (2R,3S)-3-isopropylmalate + NAD(+) = 4-methyl-2-oxopentanoate + CO2 + NADH. The protein operates within amino-acid biosynthesis; L-leucine biosynthesis; L-leucine from 3-methyl-2-oxobutanoate: step 3/4. In terms of biological role, catalyzes the oxidation of 3-carboxy-2-hydroxy-4-methylpentanoate (3-isopropylmalate) to 3-carboxy-4-methyl-2-oxopentanoate. The product decarboxylates to 4-methyl-2 oxopentanoate. The protein is 3-isopropylmalate dehydrogenase of Buchnera aphidicola subsp. Thelaxes suberi.